The sequence spans 233 residues: Leucyl/phenylalanyl-tRNA--protein transferase (233 aa).

The protein belongs to the L/F-transferase family.

It localises to the cytoplasm. The enzyme catalyses N-terminal L-lysyl-[protein] + L-leucyl-tRNA(Leu) = N-terminal L-leucyl-L-lysyl-[protein] + tRNA(Leu) + H(+). It catalyses the reaction N-terminal L-arginyl-[protein] + L-leucyl-tRNA(Leu) = N-terminal L-leucyl-L-arginyl-[protein] + tRNA(Leu) + H(+). It carries out the reaction L-phenylalanyl-tRNA(Phe) + an N-terminal L-alpha-aminoacyl-[protein] = an N-terminal L-phenylalanyl-L-alpha-aminoacyl-[protein] + tRNA(Phe). In terms of biological role, functions in the N-end rule pathway of protein degradation where it conjugates Leu, Phe and, less efficiently, Met from aminoacyl-tRNAs to the N-termini of proteins containing an N-terminal arginine or lysine. The protein is Leucyl/phenylalanyl-tRNA--protein transferase of Laribacter hongkongensis (strain HLHK9).